Reading from the N-terminus, the 281-residue chain is Proteasome subunit beta (281 aa).

The propeptide at 1 to 53 (MEANTRSTGRLPAAFLTPGSSSFMDFLSDQSPEMLPGNRSLPPLQGAVEAPHG) is removed in mature form; by autocatalysis. The active-site Nucleophile is Thr54.

The protein belongs to the peptidase T1B family. As to quaternary structure, the 20S proteasome core is composed of 14 alpha and 14 beta subunits that assemble into four stacked heptameric rings, resulting in a barrel-shaped structure. The two inner rings, each composed of seven catalytic beta subunits, are sandwiched by two outer rings, each composed of seven alpha subunits. The catalytic chamber with the active sites is on the inside of the barrel. Has a gated structure, the ends of the cylinder being occluded by the N-termini of the alpha-subunits. Is capped by the proteasome-associated ATPase, ARC.

The protein localises to the cytoplasm. It catalyses the reaction Cleavage of peptide bonds with very broad specificity.. It participates in protein degradation; proteasomal Pup-dependent pathway. With respect to regulation, the formation of the proteasomal ATPase ARC-20S proteasome complex, likely via the docking of the C-termini of ARC into the intersubunit pockets in the alpha-rings, may trigger opening of the gate for substrate entry. Interconversion between the open-gate and close-gate conformations leads to a dynamic regulation of the 20S proteasome proteolysis activity. Functionally, component of the proteasome core, a large protease complex with broad specificity involved in protein degradation. This chain is Proteasome subunit beta, found in Streptomyces griseus subsp. griseus (strain JCM 4626 / CBS 651.72 / NBRC 13350 / KCC S-0626 / ISP 5235).